The chain runs to 285 residues: Polyamine aminopropyltransferase (285 aa).

A PABS domain is found at 5 to 241 (DTWFTEHFQA…GWWSVTLSSK (237 aa)). S-methyl-5'-thioadenosine is bound at residue Gln-35. Positions 66 and 90 each coordinate spermidine. S-methyl-5'-thioadenosine is bound by residues Asp-110 and 141-142 (DG). Residue Asp-160 is the Proton acceptor of the active site. 160 to 163 (DSTD) lines the spermidine pocket. Pro-167 provides a ligand contact to S-methyl-5'-thioadenosine.

This sequence belongs to the spermidine/spermine synthase family. Homodimer or homotetramer.

It localises to the cytoplasm. It catalyses the reaction S-adenosyl 3-(methylsulfanyl)propylamine + putrescine = S-methyl-5'-thioadenosine + spermidine + H(+). It functions in the pathway amine and polyamine biosynthesis; spermidine biosynthesis; spermidine from putrescine: step 1/1. Its function is as follows. Catalyzes the irreversible transfer of a propylamine group from the amino donor S-adenosylmethioninamine (decarboxy-AdoMet) to putrescine (1,4-diaminobutane) to yield spermidine. The polypeptide is Polyamine aminopropyltransferase (Xylella fastidiosa (strain M12)).